A 237-amino-acid chain; its full sequence is Uridylate kinase (237 aa).

ATP is bound at residue 12–15 (KLSG). Residues 20-25 (GEDGLG) are involved in allosteric activation by GTP. Gly-54 is a UMP binding site. Residues Gly-55 and Arg-59 each contribute to the ATP site. UMP-binding positions include Asp-74 and 135-142 (TGNPFFTT). ATP is bound by residues Thr-162, Tyr-168, and Asp-171.

Belongs to the UMP kinase family. In terms of assembly, homohexamer.

The protein resides in the cytoplasm. The enzyme catalyses UMP + ATP = UDP + ADP. It participates in pyrimidine metabolism; CTP biosynthesis via de novo pathway; UDP from UMP (UMPK route): step 1/1. Allosterically activated by GTP. Inhibited by UTP. Functionally, catalyzes the reversible phosphorylation of UMP to UDP. This Haemophilus influenzae (strain ATCC 51907 / DSM 11121 / KW20 / Rd) protein is Uridylate kinase (pyrH).